Consider the following 60-residue polypeptide: Conotoxin Cal6.30 (60 aa).

The signal sequence occupies residues 1–22 (MKVTCVLTLAVLILTIGQIANA). Cystine bridges form between cysteine 31–cysteine 47, cysteine 38–cysteine 51, and cysteine 46–cysteine 55.

In terms of tissue distribution, expressed by the venom duct.

The protein resides in the secreted. In terms of biological role, probable neurotoxin. The chain is Conotoxin Cal6.30 from Californiconus californicus (California cone).